We begin with the raw amino-acid sequence, 414 residues long: Serine--tRNA ligase (414 aa).

Residue Thr-230–Glu-232 participates in L-serine binding. Residue Arg-261–Glu-263 coordinates ATP. Residue Glu-284 coordinates L-serine. Residue Glu-348 to Ser-351 participates in ATP binding. Ser-382 lines the L-serine pocket.

The protein belongs to the class-II aminoacyl-tRNA synthetase family. Type-1 seryl-tRNA synthetase subfamily. As to quaternary structure, homodimer. The tRNA molecule binds across the dimer.

It is found in the cytoplasm. It carries out the reaction tRNA(Ser) + L-serine + ATP = L-seryl-tRNA(Ser) + AMP + diphosphate + H(+). The catalysed reaction is tRNA(Sec) + L-serine + ATP = L-seryl-tRNA(Sec) + AMP + diphosphate + H(+). It participates in aminoacyl-tRNA biosynthesis; selenocysteinyl-tRNA(Sec) biosynthesis; L-seryl-tRNA(Sec) from L-serine and tRNA(Sec): step 1/1. Catalyzes the attachment of serine to tRNA(Ser). Is also able to aminoacylate tRNA(Sec) with serine, to form the misacylated tRNA L-seryl-tRNA(Sec), which will be further converted into selenocysteinyl-tRNA(Sec). This is Serine--tRNA ligase from Campylobacter fetus subsp. fetus (strain 82-40).